We begin with the raw amino-acid sequence, 122 residues long: UPF0102 protein BARBAKC583_1042 (122 aa).

Belongs to the UPF0102 family.

The polypeptide is UPF0102 protein BARBAKC583_1042 (Bartonella bacilliformis (strain ATCC 35685 / KC583 / Herrer 020/F12,63)).